A 760-amino-acid chain; its full sequence is Leucine-rich repeat extensin-like protein 3 (760 aa).

The first 20 residues, 1–20 (MKKTIQILLFFFFLINLTNA), serve as a signal peptide directing secretion. N-linked (GlcNAc...) asparagine glycosylation occurs at N16. The LRR 1 repeat unit spans residues 21-45 (LSISSDGGVLSDNEVRHIQRRQLLE). Residues N86 and N98 are each glycosylated (N-linked (GlcNAc...) asparagine). LRR repeat units lie at residues 113–137 (IRTVAGIDLNHADIAGYLPEELGLL), 138–160 (SDLALFHVNSNRFCGTVPHRFNR), 161–185 (LKLLFELDLSNNRFAGKFPTVVLQL), 186–209 (PSLKFLDLRFNEFEGTVPKELFSK), 211–232 (LDAIFINHNRFRFELPENFGDS), 234–255 (VSVIVLANNRFHGCVPSSLVEM), 256–279 (KNLNEIIFMNNGLNSCLPSDIGRL), 281–303 (NVTVFDVSFNELVGPLPESVGEM), and 304–327 (VSVEQLNVAHNMLSGKIPASICQL). A glycan (N-linked (GlcNAc...) asparagine) is linked at N281. The N-linked (GlcNAc...) asparagine glycan is linked to N332. Disordered regions lie at residues 389–502 (GRSV…PPPP), 515–610 (PPVY…YSPP), and 663–748 (PPPP…PVIG). Pro residues-rich tracts occupy residues 394–415 (PRPPVVTPLPPPSLPSPPPPAP) and 423–502 (LTSP…PPPP). The contains the Ser-Pro(4) repeats stretch occupies residues 409–758 (SPPPPAPIFS…VSYASPPPPP (350 aa)). Residues 663–745 (PPPPVHYSSP…SPEYEGPLPP (83 aa)) are compositionally biased toward pro residues.

In terms of assembly, interacts with SH3P1. In terms of processing, hydroxylated on proline residues in the S-P-P-P-P repeat. O-glycosylated on hydroxyprolines. In terms of tissue distribution, expressed in roots, stems, leaves and flowers, mostly in vascular tissues.

Its subcellular location is the secreted. It is found in the cell wall. Modulates cell morphogenesis by regulating cell wall formation and assembly, and/or growth polarization. This is Leucine-rich repeat extensin-like protein 3 (LRX3) from Arabidopsis thaliana (Mouse-ear cress).